The following is a 488-amino-acid chain: Bifunctional protein GlmU (488 aa).

The pyrophosphorylase stretch occupies residues 1–237 (MPRTRTPLAA…AEEASGVNDR (237 aa)). UDP-N-acetyl-alpha-D-glucosamine contacts are provided by residues 13–16 (LAAG), Lys27, Gln82, 87–88 (GT), 110–112 (SGD), Gly149, Glu164, Asn179, and Asn235. Asp112 is a binding site for Mg(2+). Asn235 provides a ligand contact to Mg(2+). The tract at residues 238–258 (IELARANRVMVGRLAEAFMRA) is linker. Positions 259 to 488 (GVTIEDPARF…KGRPAARRAS (230 aa)) are N-acetyltransferase. The UDP-N-acetyl-alpha-D-glucosamine site is built by Arg341 and Lys359. His371 (proton acceptor) is an active-site residue. Residues Tyr374 and Asn385 each contribute to the UDP-N-acetyl-alpha-D-glucosamine site. Acetyl-CoA-binding positions include Ala388, 394–395 (NY), Ser413, Ala431, and Arg448. The segment at 459–488 (AQRQAEKQMKGTATGPAPARKGRPAARRAS) is disordered. Residues 478–488 (RKGRPAARRAS) are compositionally biased toward basic residues.

In the N-terminal section; belongs to the N-acetylglucosamine-1-phosphate uridyltransferase family. It in the C-terminal section; belongs to the transferase hexapeptide repeat family. As to quaternary structure, homotrimer. It depends on Mg(2+) as a cofactor.

It is found in the cytoplasm. It carries out the reaction alpha-D-glucosamine 1-phosphate + acetyl-CoA = N-acetyl-alpha-D-glucosamine 1-phosphate + CoA + H(+). The catalysed reaction is N-acetyl-alpha-D-glucosamine 1-phosphate + UTP + H(+) = UDP-N-acetyl-alpha-D-glucosamine + diphosphate. It functions in the pathway nucleotide-sugar biosynthesis; UDP-N-acetyl-alpha-D-glucosamine biosynthesis; N-acetyl-alpha-D-glucosamine 1-phosphate from alpha-D-glucosamine 6-phosphate (route II): step 2/2. It participates in nucleotide-sugar biosynthesis; UDP-N-acetyl-alpha-D-glucosamine biosynthesis; UDP-N-acetyl-alpha-D-glucosamine from N-acetyl-alpha-D-glucosamine 1-phosphate: step 1/1. Its pathway is bacterial outer membrane biogenesis; LPS lipid A biosynthesis. Functionally, catalyzes the last two sequential reactions in the de novo biosynthetic pathway for UDP-N-acetylglucosamine (UDP-GlcNAc). The C-terminal domain catalyzes the transfer of acetyl group from acetyl coenzyme A to glucosamine-1-phosphate (GlcN-1-P) to produce N-acetylglucosamine-1-phosphate (GlcNAc-1-P), which is converted into UDP-GlcNAc by the transfer of uridine 5-monophosphate (from uridine 5-triphosphate), a reaction catalyzed by the N-terminal domain. The polypeptide is Bifunctional protein GlmU (Anaeromyxobacter dehalogenans (strain 2CP-C)).